Reading from the N-terminus, the 271-residue chain is DNA repair protein RecO (271 aa).

Over residues valine 249–threonine 264 the composition is skewed to basic and acidic residues. The interval valine 249 to alanine 271 is disordered.

Belongs to the RecO family.

In terms of biological role, involved in DNA repair and RecF pathway recombination. This is DNA repair protein RecO from Rhodococcus jostii (strain RHA1).